The sequence spans 379 residues: Thiosulfate/3-mercaptopyruvate sulfurtransferase 1, mitochondrial (379 aa).

A mitochondrion-targeting transit peptide spans Met1–Arg56. The residue at position 57 (Ala57) is an N-acetylalanine. 2 Rhodanese domains span residues Arg91–Ser208 and Glu259–Glu373. The Cysteine persulfide intermediate role is filled by Cys333.

As to expression, expressed in roots, rosette and cauline leaves, stems, flowers and siliques.

The protein resides in the mitochondrion. It carries out the reaction thiosulfate + hydrogen cyanide = thiocyanate + sulfite + 2 H(+). It catalyses the reaction 2-oxo-3-sulfanylpropanoate + [thioredoxin]-dithiol = [thioredoxin]-disulfide + hydrogen sulfide + pyruvate + H(+). Catalyzes the transfer of a sulfur ion from a donor to cyanide or to other thiol compounds. Substrate preference is 3-mercaptopyruvate &gt; thiosulfate. Involved in embryo and seed development. The protein is Thiosulfate/3-mercaptopyruvate sulfurtransferase 1, mitochondrial (STR1) of Arabidopsis thaliana (Mouse-ear cress).